Reading from the N-terminus, the 359-residue chain is Mannonate dehydratase (359 aa).

Belongs to the mannonate dehydratase family. Fe(2+) serves as cofactor. The cofactor is Mn(2+).

It catalyses the reaction D-mannonate = 2-dehydro-3-deoxy-D-gluconate + H2O. Its pathway is carbohydrate metabolism; pentose and glucuronate interconversion. Functionally, catalyzes the dehydration of D-mannonate. The protein is Mannonate dehydratase of Moorella thermoacetica (strain ATCC 39073 / JCM 9320).